The following is a 176-amino-acid chain: MSRIGLKTIEVPDSVTVTKDGDNITVKGPKGELTRYFDPKITFEQKDGEINFSRSSESDKALHGTERANLASMIEGVVNGYKKTLKLIGVGYRAQAQGNKVTLNVGYSHPVVLTAPEGVTVKATSATDVEVEGVSKQDVGQFAAEIRAVRPPEPYKGKGIRYVDEYVRRKEGKTGK.

It belongs to the universal ribosomal protein uL6 family. As to quaternary structure, part of the 50S ribosomal subunit.

In terms of biological role, this protein binds to the 23S rRNA, and is important in its secondary structure. It is located near the subunit interface in the base of the L7/L12 stalk, and near the tRNA binding site of the peptidyltransferase center. The chain is Large ribosomal subunit protein uL6 from Lactobacillus helveticus (strain DPC 4571).